Reading from the N-terminus, the 256-residue chain is Thiazole synthase (256 aa).

The active-site Schiff-base intermediate with DXP is the lysine 95. 1-deoxy-D-xylulose 5-phosphate is bound by residues glycine 156, 182 to 183 (AG), and 204 to 205 (NT).

This sequence belongs to the ThiG family. Homotetramer. Forms heterodimers with either ThiH or ThiS.

The protein localises to the cytoplasm. It catalyses the reaction [ThiS sulfur-carrier protein]-C-terminal-Gly-aminoethanethioate + 2-iminoacetate + 1-deoxy-D-xylulose 5-phosphate = [ThiS sulfur-carrier protein]-C-terminal Gly-Gly + 2-[(2R,5Z)-2-carboxy-4-methylthiazol-5(2H)-ylidene]ethyl phosphate + 2 H2O + H(+). The protein operates within cofactor biosynthesis; thiamine diphosphate biosynthesis. Its function is as follows. Catalyzes the rearrangement of 1-deoxy-D-xylulose 5-phosphate (DXP) to produce the thiazole phosphate moiety of thiamine. Sulfur is provided by the thiocarboxylate moiety of the carrier protein ThiS. In vitro, sulfur can be provided by H(2)S. The chain is Thiazole synthase from Salmonella typhi.